Here is a 137-residue protein sequence, read N- to C-terminus: Small ribosomal subunit protein bS16m (137 aa).

Residues 1–34 (MVHLTTLLCKAYRGGHLTIRLALGGCTNRPFYRI) constitute a mitochondrion transit peptide. Residue T130 is modified to Phosphothreonine.

The protein belongs to the bacterial ribosomal protein bS16 family. As to quaternary structure, component of the mitochondrial ribosome small subunit (28S) which comprises a 12S rRNA and about 30 distinct proteins.

It localises to the mitochondrion. This Pongo abelii (Sumatran orangutan) protein is Small ribosomal subunit protein bS16m (MRPS16).